The primary structure comprises 138 residues: Membrane glycoprotein UL139 (138 aa).

The N-terminal stretch at 1-15 (MLWILVLFALAASAS) is a signal peptide. Residues 17 to 37 (TTTGTSSNSSQSTSAGTTNTT) form a disordered region. Residues 64–84 (GWTLSGLLLIFTCCLCCFWLV) traverse the membrane as a helical segment. A compositionally biased stretch (polar residues) spans 113–129 (SDATLPMGTTGSYTPPQ). The segment at 113–138 (SDATLPMGTTGSYTPPQDGSFPPPPR) is disordered.

It is found in the host membrane. The polypeptide is Membrane glycoprotein UL139 (UL139) (Homo sapiens (Human)).